Here is a 266-residue protein sequence, read N- to C-terminus: Tryptophan synthase alpha chain (266 aa).

Catalysis depends on proton acceptor residues Glu45 and Asp56.

Belongs to the TrpA family. As to quaternary structure, tetramer of two alpha and two beta chains.

It carries out the reaction (1S,2R)-1-C-(indol-3-yl)glycerol 3-phosphate + L-serine = D-glyceraldehyde 3-phosphate + L-tryptophan + H2O. The protein operates within amino-acid biosynthesis; L-tryptophan biosynthesis; L-tryptophan from chorismate: step 5/5. Its function is as follows. The alpha subunit is responsible for the aldol cleavage of indoleglycerol phosphate to indole and glyceraldehyde 3-phosphate. This Novosphingobium aromaticivorans (strain ATCC 700278 / DSM 12444 / CCUG 56034 / CIP 105152 / NBRC 16084 / F199) protein is Tryptophan synthase alpha chain.